A 76-amino-acid polypeptide reads, in one-letter code: Small ribosomal subunit protein bS18 (76 aa).

Belongs to the bacterial ribosomal protein bS18 family. As to quaternary structure, part of the 30S ribosomal subunit. Forms a tight heterodimer with protein bS6.

In terms of biological role, binds as a heterodimer with protein bS6 to the central domain of the 16S rRNA, where it helps stabilize the platform of the 30S subunit. The sequence is that of Small ribosomal subunit protein bS18 from Pseudomonas fluorescens (strain ATCC BAA-477 / NRRL B-23932 / Pf-5).